A 512-amino-acid polypeptide reads, in one-letter code: Replication initiation protein (512 aa).

Essential for replication. Binds specifically to a 60-bp region corresponding to the putative origin of replication of pXO2. Also binds nonspecifically to single-stranded DNA with lower affinity. The sequence is that of Replication initiation protein (repS) from Bacillus anthracis.